The chain runs to 425 residues: L-cysteine:1D-myo-inositol 2-amino-2-deoxy-alpha-D-glucopyranoside ligase (425 aa).

Cys43 contributes to the Zn(2+) binding site. Residues 43-46 (CGIT), Ser58, and 81-83 (NVT) each bind L-cysteinyl-5'-AMP. A 'HIGH' region motif is present at residues 45-55 (ITPYDATHMGH). Positions 199-204 (ERGGDP) match the 'ERGGDP' region motif. Trp240 serves as a coordination point for L-cysteinyl-5'-AMP. Cys244 is a Zn(2+) binding site. L-cysteinyl-5'-AMP is bound at residue 262-264 (GSD). His269 is a Zn(2+) binding site. Val295 lines the L-cysteinyl-5'-AMP pocket. The 'KMSKS' region signature appears at 301–305 (KMSKS).

This sequence belongs to the class-I aminoacyl-tRNA synthetase family. MshC subfamily. As to quaternary structure, monomer. Requires Zn(2+) as cofactor.

It catalyses the reaction 1D-myo-inositol 2-amino-2-deoxy-alpha-D-glucopyranoside + L-cysteine + ATP = 1D-myo-inositol 2-(L-cysteinylamino)-2-deoxy-alpha-D-glucopyranoside + AMP + diphosphate + H(+). In terms of biological role, catalyzes the ATP-dependent condensation of GlcN-Ins and L-cysteine to form L-Cys-GlcN-Ins. The sequence is that of L-cysteine:1D-myo-inositol 2-amino-2-deoxy-alpha-D-glucopyranoside ligase from Paenarthrobacter aurescens (strain TC1).